A 782-amino-acid chain; its full sequence is MDSSIHLSSLISRHDDEATRTSTSEGLEEGEVEGETLLIVESEDQASVDLSHDQSGDSLNSDEGDVSWMEEQLSYFCDKCQKWIPASQLREQLSYLKGDNFFRFTCSDCSADGKEQYERLKLTWQQVVMLAMYNLSLEGSGRQGYFRWKEDICAFIEKHWTFLLGNRKKTSTWWSTVAGCLSVGSPMYFRSGAQEFGEPGWWKLVHNKPPTMKPEGEKLSASTLKIKAASKPTLDPIITVEGLRKRASRNPVESAMELKEKRSRTQEAKDIRRAQKEAAGFLDRSTSSTPVKFISRGRRPDVILEKGEVIDFSSLSSSDRTPLTSPSPSPSLDFSAPGTPASHSATPSLLSEADLIPDVMPPQALFHDDDEMEGDGVIDPGMEYVPPPAGSVASGPVVGVRKKVRGPEQIKQEVESEEEKPDRMDIDSEDTDSNTSLQTRAREKRKPQLEKDTKPKEPRYTPVSIYEEKLLLKRLEACPGAVAMTPEARRLKRKLIVRQAKRDRGLPLFDLDQVVNAALLLVDGIYGAKEGGISRLPAGQATYRTTCQDFRILDRYQTSLPSRKGFRHQTTKFLYRLVGSEDMAVDQSIVSPYTSRILKPYIRRDYETKPPKLQLLSQIRSHLHRSDPHWTPEPDAPLDYCYVRPNHIPTINSMCQEFFWPGIDLSECLQYPDFSVVVLYKKVIIAFGFMVPDVKYNEAYISFLFVHPEWRRAGIATFMIYHLIQTCMGKDVTLHVSASNPAMLLYQKFGFKTEEYVLDFYDKYYPLESTECKHAFFLRLRR.

Ser-4 carries the phosphoserine modification. The tract at residues 13–33 (RHDDEATRTSTSEGLEEGEVE) is disordered. Lys-231 carries the N6-acetyllysine modification. Positions 251–282 (PVESAMELKEKRSRTQEAKDIRRAQKEAAGFL) are disordered. The segment covering 256-276 (MELKEKRSRTQEAKDIRRAQK) has biased composition (basic and acidic residues). Ser-285 is subject to Phosphoserine. Position 292 is an N6-acetyllysine (Lys-292). Positions 315-335 (LSSSDRTPLTSPSPSPSLDFS) are enriched in low complexity. Disordered stretches follow at residues 315–346 (LSSSDRTPLTSPSPSPSLDFSAPGTPASHSAT) and 400–460 (VRKK…EPRY). 2 stretches are compositionally biased toward basic and acidic residues: residues 405–426 (RGPEQIKQEVESEEEKPDRMDI) and 446–459 (KPQLEKDTKPKEPR). Ser-416 is subject to Phosphoserine. The N-acetyltransferase domain occupies 638-782 (LDYCYVRPNH…KHAFFLRLRR (145 aa)).

As to quaternary structure, interacts with the LIM 1 domain of CSRP2. Component of the ADA2A-containing complex (ATAC), composed of CSRP2BP, KAT2A, TADA2L, TADA3L, ZZ3, MBIP, WDR5, YEATS2, CCDC101 and DR1. In the complex, it probably interacts directly with KAT2A, MBIP and WDR5. In terms of tissue distribution, expressed in skeletal muscle, heart, lung, placenta, brain, liver, pancreas and kidney. High expression in skeletal muscle and heart. Lower expression in lung.

Its subcellular location is the nucleus. It is found in the cytoplasm. In terms of biological role, component of the ATAC complex, a complex with histone acetyltransferase activity on histones H3 and H4. May function as a scaffold for the ATAC complex to promote ATAC complex stability. Has also weak histone acetyltransferase activity toward histone H4. Required for the normal progression through G1 and G2/M phases of the cell cycle. This Homo sapiens (Human) protein is Cysteine-rich protein 2-binding protein.